We begin with the raw amino-acid sequence, 94 residues long: Acylphosphatase (94 aa).

An Acylphosphatase-like domain is found at 8–94 (TLFIIVHGKV…GRRFKHFAQH (87 aa)). Catalysis depends on residues arginine 23 and asparagine 41. A disordered region spans residues 69-94 (PPAASVTELESRREDGGRRFKHFAQH). Residues 77-86 (LESRREDGGR) are compositionally biased toward basic and acidic residues.

The protein belongs to the acylphosphatase family.

The enzyme catalyses an acyl phosphate + H2O = a carboxylate + phosphate + H(+). This chain is Acylphosphatase (acyP), found in Bordetella avium (strain 197N).